The chain runs to 651 residues: Acetyl-coenzyme A synthetase (651 aa).

CoA contacts are provided by residues Arg-189–Lys-192, Thr-311, and Asn-335. Residues Gly-387 to Pro-389, Asp-411 to Thr-416, Asp-500, and Arg-515 each bind ATP. Ser-523 contacts CoA. ATP is bound at residue Arg-526. Residues Val-537, His-539, and Val-542 each contribute to the Mg(2+) site. Arg-584 serves as a coordination point for CoA. Lys-609 is subject to N6-acetyllysine.

Belongs to the ATP-dependent AMP-binding enzyme family. Mg(2+) is required as a cofactor. Post-translationally, acetylated. Deacetylation by the SIR2-homolog deacetylase activates the enzyme.

The catalysed reaction is acetate + ATP + CoA = acetyl-CoA + AMP + diphosphate. In terms of biological role, catalyzes the conversion of acetate into acetyl-CoA (AcCoA), an essential intermediate at the junction of anabolic and catabolic pathways. AcsA undergoes a two-step reaction. In the first half reaction, AcsA combines acetate with ATP to form acetyl-adenylate (AcAMP) intermediate. In the second half reaction, it can then transfer the acetyl group from AcAMP to the sulfhydryl group of CoA, forming the product AcCoA. The sequence is that of Acetyl-coenzyme A synthetase from Rhizobium leguminosarum bv. trifolii (strain WSM2304).